The sequence spans 209 residues: Uracil phosphoribosyltransferase (209 aa).

Residues arginine 79, arginine 104, and 131 to 139 (DPMLATGAS) contribute to the 5-phospho-alpha-D-ribose 1-diphosphate site. Uracil is bound by residues isoleucine 194 and 199-201 (GDA). Aspartate 200 contacts 5-phospho-alpha-D-ribose 1-diphosphate.

It belongs to the UPRTase family. Mg(2+) serves as cofactor.

It carries out the reaction UMP + diphosphate = 5-phospho-alpha-D-ribose 1-diphosphate + uracil. The protein operates within pyrimidine metabolism; UMP biosynthesis via salvage pathway; UMP from uracil: step 1/1. Allosterically activated by GTP. In terms of biological role, catalyzes the conversion of uracil and 5-phospho-alpha-D-ribose 1-diphosphate (PRPP) to UMP and diphosphate. The chain is Uracil phosphoribosyltransferase from Staphylococcus epidermidis (strain ATCC 35984 / DSM 28319 / BCRC 17069 / CCUG 31568 / BM 3577 / RP62A).